The chain runs to 602 residues: MDVRRRSEEPVYPSKVFAADEKPLKPHKKQQQQQEDKNTLLIDASDALPLPLYLTTNGLFFTMFFSVMYFLLSRWREKIRNSTPLHVVTLSELGAIVSLIASVIYLLGFFGIGFVQTFVSRGNNDSWDENDEEFLLKEDSRCGPATTLGCAVPAPPARQIAPMAPPQPSMSMVEKPAPLITSASSGEDEEIIKSVVQGKIPSYSLESKLGDCKRAASIRKEVMQRITGKSLEGLPLEGFNYESILGQCCEMPIGYVQIPVGIAGPLLLNGKEFSVPMATTEGCLVASTNRGCKAIYASGGATCILLRDGMTRAPCVRFGTAKRAAELKFFVEDPIKFESLANVFNQSSRFARLQRIQCAIAGKNLYMRLCCSTGDAMGMNMVSKGVQNVLDYLQNEYPDMDVIGISGNFCSDKKPAAVNWIEGRGKSVVCEAIITEEVVKKVLKTEVAALVELNMLKNLTGSAMAGALGGFNAHASNIVSAVFIATGQDPAQNIESSHCITMMEAVNDGKDLHISVTMPSIEVGTVGGGTQLASQSACLNLLGVKGANREAPGSNARLLATVVAGSVLAGELSLMSAISSGQLVNSHMKYNRSTKDVTKASS.

2 helical membrane passes run 44-67 (ASDA…FFSV) and 95-115 (AIVS…IGFV). The linker stretch occupies residues 116-187 (QTFVSRGNND…PLITSASSGE (72 aa)). Asn124 is a glycosylation site (N-linked (GlcNAc...) asparagine). Positions 188–602 (DEEIIKSVVQ…STKDVTKASS (415 aa)) are catalytic. Glu281 serves as the catalytic Charge relay system. Asn345 is a glycosylation site (N-linked (GlcNAc...) asparagine). The active-site Charge relay system is Lys413. Asn458 carries an N-linked (GlcNAc...) asparagine glycan. The active-site Charge relay system is the Asp489. His587 (proton donor) is an active-site residue. The N-linked (GlcNAc...) asparagine glycan is linked to Asn591.

Belongs to the HMG-CoA reductase family.

It localises to the endoplasmic reticulum membrane. It carries out the reaction (R)-mevalonate + 2 NADP(+) + CoA = (3S)-3-hydroxy-3-methylglutaryl-CoA + 2 NADPH + 2 H(+). The protein operates within metabolic intermediate biosynthesis; (R)-mevalonate biosynthesis; (R)-mevalonate from acetyl-CoA: step 3/3. In terms of biological role, catalyzes the synthesis of mevalonate. The specific precursor of all isoprenoid compounds present in plants. The chain is 3-hydroxy-3-methylglutaryl-coenzyme A reductase 2 (HMG2) from Solanum lycopersicum (Tomato).